We begin with the raw amino-acid sequence, 147 residues long: 18 kDa antigen 1 (147 aa).

The sHSP domain occupies 21 to 131 (TPTRPAVMPM…RPRKIAVGAA (111 aa)).

Belongs to the small heat shock protein (HSP20) family.

Not known. This protein is one of the major immune reactive proteins in mycobacteria. This is 18 kDa antigen 1 from Mycobacterium avium.